Consider the following 609-residue polypeptide: CTTNBP2 N-terminal-like protein (609 aa).

The segment covering 1–10 (MEQNSNSSVA) has biased composition (polar residues). Residues 1–29 (MEQNSNSSVADTFAEAPATDADYGTENCS) are disordered. Coiled-coil stretches lie at residues 182–264 (RMVN…QKQI) and 303–370 (IAEG…QQLG). Residues 556 to 584 (PPAGARGAPPPIPTKPIVPPKREPSLSRL) are disordered. A compositionally biased stretch (pro residues) spans 563–574 (APPPIPTKPIVP). Serine 586 is modified (phosphoserine).

It is found in the cell projection. Its subcellular location is the lamellipodium. It localises to the cytoplasm. The protein resides in the cytoskeleton. The protein localises to the stress fiber. Functionally, regulates lamellipodial actin dynamics in a Cortactin-dependent manner and is therefore likely involved in controlling actin branch density, actin-retrograde flow rates and lamellipodial protrusion. Functions by slowing the dissociation of Cortactin from Arp2/3 nucleated branches thereby increasing branch nucleation and junction stability. Associates with core striatin-interacting phosphatase and kinase (STRIPAK) complex to form CTTNBP2NL-STRIPAK complexes. STRIPAK complexes have critical roles in protein (de)phosphorylation and are regulators of multiple signaling pathways including Hippo, MAPK, nuclear receptor and cytoskeleton remodeling. Different types of STRIPAK complexes are involved in a variety of biological processes such as cell growth, differentiation, apoptosis, metabolism and immune regulation. In Drosophila melanogaster (Fruit fly), this protein is CTTNBP2 N-terminal-like protein.